We begin with the raw amino-acid sequence, 641 residues long: 1-deoxy-D-xylulose-5-phosphate synthase (641 aa).

Thiamine diphosphate is bound by residues histidine 79 and 120-122; that span reads GHS. Residue aspartate 151 participates in Mg(2+) binding. Residues 152-153, asparagine 180, tyrosine 290, and glutamate 372 contribute to the thiamine diphosphate site; that span reads GS. A Mg(2+)-binding site is contributed by asparagine 180.

It belongs to the transketolase family. DXPS subfamily. In terms of assembly, homodimer. Mg(2+) serves as cofactor. Requires thiamine diphosphate as cofactor.

It carries out the reaction D-glyceraldehyde 3-phosphate + pyruvate + H(+) = 1-deoxy-D-xylulose 5-phosphate + CO2. It functions in the pathway metabolic intermediate biosynthesis; 1-deoxy-D-xylulose 5-phosphate biosynthesis; 1-deoxy-D-xylulose 5-phosphate from D-glyceraldehyde 3-phosphate and pyruvate: step 1/1. In terms of biological role, catalyzes the acyloin condensation reaction between C atoms 2 and 3 of pyruvate and glyceraldehyde 3-phosphate to yield 1-deoxy-D-xylulose-5-phosphate (DXP). The polypeptide is 1-deoxy-D-xylulose-5-phosphate synthase (Rhodopseudomonas palustris (strain TIE-1)).